A 468-amino-acid polypeptide reads, in one-letter code: Adenosylhomocysteinase (468 aa).

Residues T63, D139, and E164 each coordinate substrate. 165–167 (TTT) contributes to the NAD(+) binding site. Positions 194 and 198 each coordinate substrate. Residues N199, 228 to 233 (GYGDVG), E251, N300, 321 to 323 (IGH), and N374 each bind NAD(+).

It belongs to the adenosylhomocysteinase family. NAD(+) is required as a cofactor.

Its subcellular location is the cytoplasm. It catalyses the reaction S-adenosyl-L-homocysteine + H2O = L-homocysteine + adenosine. It functions in the pathway amino-acid biosynthesis; L-homocysteine biosynthesis; L-homocysteine from S-adenosyl-L-homocysteine: step 1/1. May play a key role in the regulation of the intracellular concentration of adenosylhomocysteine. In Stutzerimonas stutzeri (strain A1501) (Pseudomonas stutzeri), this protein is Adenosylhomocysteinase.